Consider the following 221-residue polypeptide: Chalcone--flavanone isomerase (221 aa).

Substrate is bound by residues T47, N112, and S189.

The protein belongs to the chalcone isomerase family.

The catalysed reaction is a chalcone = a flavanone.. It functions in the pathway secondary metabolite biosynthesis; flavonoid biosynthesis. Functionally, catalyzes the intramolecular cyclization of bicyclic chalcones into tricyclic (S)-flavanones. Responsible for the isomerization of 4,2',4',6'-tetrahydroxychalcone (also termed chalcone) into naringenin. This is Chalcone--flavanone isomerase (CHI) from Dianthus caryophyllus (Carnation).